We begin with the raw amino-acid sequence, 697 residues long: Methionine--tRNA ligase (697 aa).

The 'HIGH' region signature appears at 12–22 (PYANGHFHIGH). 4 residues coordinate Zn(2+): cysteine 143, cysteine 146, cysteine 156, and cysteine 159. The 'KMSKS' region signature appears at 342-346 (KMSKS). Residue lysine 345 participates in ATP binding. Residues 557 to 577 (FEPPAEPSPQTSPAAAGAGAV) are disordered. A tRNA-binding domain is found at 591-697 (DFTKIDLRLA…PGAVPGLRVR (107 aa)).

Belongs to the class-I aminoacyl-tRNA synthetase family. MetG type 1 subfamily. As to quaternary structure, homodimer. It depends on Zn(2+) as a cofactor.

The protein resides in the cytoplasm. It carries out the reaction tRNA(Met) + L-methionine + ATP = L-methionyl-tRNA(Met) + AMP + diphosphate. In terms of biological role, is required not only for elongation of protein synthesis but also for the initiation of all mRNA translation through initiator tRNA(fMet) aminoacylation. In Methylibium petroleiphilum (strain ATCC BAA-1232 / LMG 22953 / PM1), this protein is Methionine--tRNA ligase.